The chain runs to 217 residues: Probable GTP-binding protein EngB (217 aa).

The EngB-type G domain occupies 40-217; that stretch reads DVPEIAFAGR…RAAVLQDAMG (178 aa). GTP is bound by residues 48-55, 75-79, 95-98, 162-165, and 196-198; these read GRSNVGKS, GRTQE, DMPG, TKAD, and TSS. The Mg(2+) site is built by Ser55 and Thr77.

Belongs to the TRAFAC class TrmE-Era-EngA-EngB-Septin-like GTPase superfamily. EngB GTPase family. Mg(2+) is required as a cofactor.

Necessary for normal cell division and for the maintenance of normal septation. The chain is Probable GTP-binding protein EngB from Novosphingobium aromaticivorans (strain ATCC 700278 / DSM 12444 / CCUG 56034 / CIP 105152 / NBRC 16084 / F199).